The sequence spans 3068 residues: Highly reducing polyketide synthase 17 (3068 aa).

Positions 100–526 constitute a Ketosynthase family 3 (KS3) domain; the sequence is IEPIAIVGAS…GTNAHAIMER (427 aa). Catalysis depends on for beta-ketoacyl synthase activity residues C274, H410, and H449. Residues 627–938 are malonyl-CoA:ACP transacylase (MAT) domain; the sequence is YVFTGQGAQW…LAGPIRQCLA (312 aa). S721 serves as the catalytic For malonyltransferase activity. The interval 1027–1160 is N-terminal hotdog fold; sequence HHLLGVRMTE…GVVEGVMTLD (134 aa). Residues 1027-1311 form a dehydratase (DH) domain region; sequence HHLLGVRMTE…RASNIDMTIV (285 aa). The region spanning 1027 to 1334 is the PKS/mFAS DH domain; that stretch reads HHLLGVRMTE…SRSLAAHVDG (308 aa). The Proton acceptor; for dehydratase activity role is filled by H1059. The tract at residues 1179 to 1334 is C-terminal hotdog fold; sequence NRTMVIPEEL…SRSLAAHVDG (156 aa). Residue D1247 is the Proton donor; for dehydratase activity of the active site. An enoylreductase (ER) domain region spans residues 1735 to 2037; that stretch reads LGPVQSSKGD…LVRQGGKVIL (303 aa). The segment at 2062-2240 is catalytic ketoreductase (KR) domain; it reads AAYVVAGGMG…FLSMNIGWIE (179 aa). The region spanning 2345–2423 is the Carrier domain; that stretch reads TIIDFISSAI…DLAEKVASRS (79 aa). The residue at position 2383 (S2383) is an O-(pantetheine 4'-phosphoryl)serine. Positions 2831 to 3062 are choline/carnitine acyltransferase (cAT) domain; it reads FDVASLGLRS…SCMITSLLED (232 aa).

It functions in the pathway secondary metabolite biosynthesis. In terms of biological role, highly reducing polyketide synthase; part of the gene cluster that mediates the biosynthesis of (2Z,4E,6E,10E)-9-hydroxydodeca-2,4,6,10-tetraenoic acid (BAA), (2E,4E,6E,10E)-9-hydroxydodeca-2,4,6,10-tetraenoic acid (BAB), and (2Z,4E,6E)-octa-2,4,6-trienedioic acid (PBA). The highly reducing polyketide synthase Ba17a is sufficent to produce PBA and BAA. The still to be characterized protein Ba17b leads to an increased production of BAA as well as to the production of the new compound BAB. BAA does not possess insecticidal activity against G.mellonella larvae, however, both BAA and BAB increase the growth of Candida albicans and BAA can mitigate the fungicidal effects of fluconazole over C.albicans, suggesting that generalist pathogens such as M.anisopliae, can potentially manipulate the yeast microbiota found in arthropods (and anywhere else) by the activity of compounds as BAA and BAB. In Metarhizium anisopliae (Entomophthora anisopliae), this protein is Highly reducing polyketide synthase 17.